We begin with the raw amino-acid sequence, 209 residues long: Cerebral peptide 1 (209 aa).

Positions 1–20 (MLLAKISVVVLLLAIDGTSS) are cleaved as a signal peptide. Residues 21-39 (SESTDNVVLSSSPDSQKAA) are compositionally biased toward polar residues. A propeptide spans 21–43 (SESTDNVVLSSSPDSQKAATSRH) (connecting peptide 1). Positions 21–56 (SESTDNVVLSSSPDSQKAATSRHKRAPGWGKRSSLN) are disordered. Trp49 is modified (tryptophan amide). A propeptide spans 53 to 77 (SSLNDEDLFADSDSAQELLDSVAAL) (connecting peptide 2). Trp83 and Trp105 each carry tryptophan amide. The segment at 98 to 169 (EAKRAPGWGK…APGWGKRSGG (72 aa)) is disordered. Residues 109-122 (GQEIDVDEDGSEQE) constitute a propeptide, connecting peptide 4. Tryptophan amide occurs at positions 128, 135, 142, 149, 156, and 163. A propeptide spans 167–191 (SGGDYCETLEKMVDAYIYKAVEVDS) (connecting peptide 5). Cys172 and Cys197 are oxidised to a cystine.

As to quaternary structure, homodimer; disulfide-linked. As to expression, cerebral peptide 1 is expressed in the cerebral, pedal and buccal ganglia and B1 and B2 neurons. APGW-amide is expressed in buccal ganglia and several neurons.

The protein localises to the secreted. May function as a peptide transmitter. In Aplysia californica (California sea hare), this protein is Cerebral peptide 1.